The sequence spans 417 residues: UDP-N-acetylglucosamine 1-carboxyvinyltransferase (417 aa).

22 to 23 (KN) contributes to the phosphoenolpyruvate binding site. R91 serves as a coordination point for UDP-N-acetyl-alpha-D-glucosamine. C115 functions as the Proton donor in the catalytic mechanism. C115 carries the post-translational modification 2-(S-cysteinyl)pyruvic acid O-phosphothioketal. Residues 120–124 (RPVDL), D304, and I326 each bind UDP-N-acetyl-alpha-D-glucosamine.

It belongs to the EPSP synthase family. MurA subfamily.

It is found in the cytoplasm. The enzyme catalyses phosphoenolpyruvate + UDP-N-acetyl-alpha-D-glucosamine = UDP-N-acetyl-3-O-(1-carboxyvinyl)-alpha-D-glucosamine + phosphate. The protein operates within cell wall biogenesis; peptidoglycan biosynthesis. In terms of biological role, cell wall formation. Adds enolpyruvyl to UDP-N-acetylglucosamine. In Nitratidesulfovibrio vulgaris (strain DSM 19637 / Miyazaki F) (Desulfovibrio vulgaris), this protein is UDP-N-acetylglucosamine 1-carboxyvinyltransferase.